The chain runs to 186 residues: Adenine phosphoribosyltransferase (186 aa).

Belongs to the purine/pyrimidine phosphoribosyltransferase family. As to quaternary structure, homodimer.

It is found in the cytoplasm. The catalysed reaction is AMP + diphosphate = 5-phospho-alpha-D-ribose 1-diphosphate + adenine. It functions in the pathway purine metabolism; AMP biosynthesis via salvage pathway; AMP from adenine: step 1/1. In terms of biological role, catalyzes a salvage reaction resulting in the formation of AMP, that is energically less costly than de novo synthesis. The chain is Adenine phosphoribosyltransferase from Xanthomonas euvesicatoria pv. vesicatoria (strain 85-10) (Xanthomonas campestris pv. vesicatoria).